The following is an 808-amino-acid chain: MGSNLPAQPNLRVTIIAADGLYKRDVFRFPDPFAVATVGGEQTHTTSVIKKTLNPYWNEMFDLRVNEDSILAIQIFDQKKFKKKDQGFLGVINVRIGDVIDLQMGGDEMLTRDLKKSNDNLVVHGKLIINLSTNLSTPNTNQANGLHRSNLQSSTSSGLVPQVTAPHASPGPSQLDPTASNPSLNPQRVPSTTRPSSTVAPVNGAAAPGASRTNLSSFEDSQGRLPAGWERREDNLGRTYYVDHNTRTTTWTRPSSNYNEATQRTQREANMQLERRAHQSRMLPEDRTGASSPNLQENQQAQTPPAGGSANAVSMMATGATTAGTGELPPGWEQRTTPEGRPYFVDHNTRTTTWVDPRRQQYIRMYGQNANGNNTTIQQQPVSQLGPLPSGWEMRLTNTARVYFVDHNTKTTTWDDPRLPSSLDQGVPQYKRDFRRKLIYFRSQPALRIMSGQCHVKVRRNNIFEDSYAEIMRQSASDLKKRLMIKFDGEDGLDYGGLSREFFFLLSHEMFNPFYCLFEYSAHDNYTLQINPHSGVNPEHLNYFKFIGRVVGLAIFHRRFLDSFFIGAFYKMMLRKKVSLQDMEGVDEDLHRNLTWTLDNDIEGIIELTFAVDDEKFGERRTIDLKPGGRDIPVTNENKHEYVELVTEWKIVKRVEEQFNAFMSGFNELIPADLVNVFDERELELLIGGIADIDVDDWKKHTDYRGYQEQDEVIQNFWKIVRTWDAEQKSRLLQFTTGTSRIPVNGFKDLQGSDGPRRFTIEKSGDPAALPKSHTCFNRLDLPPYKTHETLEHKLSIAVEETLGFGQE.

One can recognise a C2 domain in the interval 1-112; the sequence is MGSNLPAQPN…QMGGDEMLTR (112 aa). Disordered regions lie at residues 134-231 and 275-346; these read NLST…GWER and RRAH…YFVD. Polar residues-rich tracts occupy residues 142–159 and 171–198; these read QANGLHRSNLQSSTSSGL and GPSQLDPTASNPSLNPQRVPSTTRPSST. Residues 199–210 are compositionally biased toward low complexity; that stretch reads VAPVNGAAAPGA. The span at 211-220 shows a compositional bias: polar residues; it reads SRTNLSSFED. Residues 223 to 256 enclose the WW 1 domain; that stretch reads GRLPAGWERREDNLGRTYYVDHNTRTTTWTRPSS. Over residues 275-288 the composition is skewed to basic and acidic residues; that stretch reads RRAHQSRMLPEDRT. Over residues 289–303 the composition is skewed to polar residues; that stretch reads GASSPNLQENQQAQT. Residues 317 to 326 are compositionally biased toward low complexity; that stretch reads ATGATTAGTG. 2 WW domains span residues 326 to 359 and 386 to 419; these read GELPPGWEQRTTPEGRPYFVDHNTRTTTWVDPRR and GPLPSGWEMRLTNTARVYFVDHNTKTTTWDDPRL. The HECT domain occupies 475-808; sequence SASDLKKRLM…VEETLGFGQE (334 aa). Catalysis depends on cysteine 776, which acts as the Glycyl thioester intermediate.

Belongs to the RSP5/NEDD4 family. Interacts with creD.

Its subcellular location is the cytoplasm. The enzyme catalyses S-ubiquitinyl-[E2 ubiquitin-conjugating enzyme]-L-cysteine + [acceptor protein]-L-lysine = [E2 ubiquitin-conjugating enzyme]-L-cysteine + N(6)-ubiquitinyl-[acceptor protein]-L-lysine.. It participates in protein modification; protein ubiquitination. E3 ubiquitin-protein ligase which accepts ubiquitin from an E2 ubiquitin-conjugating enzyme in the form of a thioester and then directly transfers the ubiquitin to targeted substrates. Probably involved in the regulatory network controlling carbon source utilization. This Aspergillus terreus (strain NIH 2624 / FGSC A1156) protein is Probable E3 ubiquitin-protein ligase hulA (hulA).